The sequence spans 356 residues: N-methyltransferase 4 (356 aa).

S-adenosyl-L-methionine-binding positions include 93 to 94, 128 to 136, and 155 to 160; these read QS, ILDIGCGFG, and TNSAEQ.

This sequence belongs to the CFA/CMAS family. Expressed in stems, roots, flower buds and leaves.

Its function is as follows. Probable N-methyltransferase not involved in benzylisoquinoline metabolism. Shows no detectable activity with (s)-coclaurine, (R)- or (S)-reticuline, papaverine or (R,S)-tetrahydropapaverine. This chain is N-methyltransferase 4 (NMT4), found in Papaver somniferum (Opium poppy).